The chain runs to 555 residues: DNA-directed primase/polymerase protein (555 aa).

A coiled-coil region spans residues 1 to 22 (MKRKWEATLKQIEERASHYERK). Substrate contacts are provided by residues R76, 114 to 116 (DLE), and 165 to 169 (KFSRH). Mn(2+) is bound by residues D114 and E116. The interval 210 to 230 (ETTGHEFTHFSETPSEQGTCF) is disordered. Positions 219-230 (FSETPSEQGTCF) are enriched in polar residues. S255 is modified (phosphoserine). Residues 288–291 (RNFR) and K297 contribute to the substrate site. 4 residues coordinate Zn(2+): C418, H425, C445, and C450. The Zinc knuckle motif signature appears at 418 to 451 (CENIGRAHRSNNIMILVDLKNEVWYQKCHDPVCK). The segment at 480–503 (TDTTADTETKSPHGPSSSVLSKGA) is disordered. The segment at 480 to 555 (TDTTADTETK…DELLIEVLQE (76 aa)) is interaction with RPA1. Short sequence motifs (RPA1-binding motif) lie at residues 509 to 523 (WDNG…EATE) and 543 to 551 (EIPDELLIE).

Belongs to the eukaryotic-type primase small subunit family. Interacts with RPA1; leading to recruitment to chromatin and stimulate DNA primase activity. Interacts with SSBP1. Interacts with POLDIP2; leading to enhance DNA polymerase activity. It depends on Mn(2+) as a cofactor.

The protein resides in the nucleus. The protein localises to the mitochondrion matrix. Its subcellular location is the chromosome. The enzyme catalyses ssDNA + n NTP = ssDNA/pppN(pN)n-1 hybrid + (n-1) diphosphate.. It carries out the reaction DNA(n) + a 2'-deoxyribonucleoside 5'-triphosphate = DNA(n+1) + diphosphate. DNA primase and DNA polymerase required to tolerate replication-stalling lesions by bypassing them. Required to facilitate mitochondrial and nuclear replication fork progression by initiating de novo DNA synthesis using dNTPs and acting as an error-prone DNA polymerase able to bypass certain DNA lesions. Shows a high capacity to tolerate DNA damage lesions such as 8oxoG and abasic sites in DNA. Provides different translesion synthesis alternatives when DNA replication is stalled: able to synthesize DNA primers downstream of lesions, such as ultraviolet (UV) lesions, R-loops and G-quadruplexes, to allow DNA replication to continue. Can also realign primers ahead of 'unreadable lesions' such as abasic sites and 6-4 photoproduct (6-4 pyrimidine-pyrimidinone), thereby skipping the lesion. Repriming avoids fork degradation while leading to accumulation of internal ssDNA gaps behind the forks. Also able to incorporate nucleotides opposite DNA lesions such as 8oxoG, like a regular translesion synthesis DNA polymerase. Also required for reinitiating stalled forks after UV damage during nuclear DNA replication. Required for mitochondrial DNA (mtDNA) synthesis and replication, by reinitiating synthesis after UV damage or in the presence of chain-terminating nucleotides. Prevents APOBEC family-mediated DNA mutagenesis by repriming downstream of abasic site to prohibit error-prone translesion synthesis. Has non-overlapping function with POLH. In addition to its role in DNA damage response, also required to maintain efficient nuclear and mitochondrial DNA replication in unperturbed cells. The polypeptide is DNA-directed primase/polymerase protein (Bos taurus (Bovine)).